We begin with the raw amino-acid sequence, 653 residues long: tRNA 5-methylaminomethyl-2-thiouridine biosynthesis bifunctional protein MnmC (653 aa).

Residues 1–236 (MPDRLVPATL…KFAMLVGEYA (236 aa)) are tRNA (mnm(5)s(2)U34)-methyltransferase. Positions 260-653 (IGAGLAGCAL…IRALRGRKLG (394 aa)) are FAD-dependent cmnm(5)s(2)U34 oxidoreductase.

It in the N-terminal section; belongs to the methyltransferase superfamily. tRNA (mnm(5)s(2)U34)-methyltransferase family. In the C-terminal section; belongs to the DAO family. FAD serves as cofactor.

It localises to the cytoplasm. The enzyme catalyses 5-aminomethyl-2-thiouridine(34) in tRNA + S-adenosyl-L-methionine = 5-methylaminomethyl-2-thiouridine(34) in tRNA + S-adenosyl-L-homocysteine + H(+). Catalyzes the last two steps in the biosynthesis of 5-methylaminomethyl-2-thiouridine (mnm(5)s(2)U) at the wobble position (U34) in tRNA. Catalyzes the FAD-dependent demodification of cmnm(5)s(2)U34 to nm(5)s(2)U34, followed by the transfer of a methyl group from S-adenosyl-L-methionine to nm(5)s(2)U34, to form mnm(5)s(2)U34. This Burkholderia vietnamiensis (strain G4 / LMG 22486) (Burkholderia cepacia (strain R1808)) protein is tRNA 5-methylaminomethyl-2-thiouridine biosynthesis bifunctional protein MnmC.